Reading from the N-terminus, the 359-residue chain is 4-hydroxy-3-methylbut-2-en-1-yl diphosphate synthase (flavodoxin) (359 aa).

Residues Cys264, Cys267, Cys299, and Glu306 each contribute to the [4Fe-4S] cluster site.

It belongs to the IspG family. The cofactor is [4Fe-4S] cluster.

It catalyses the reaction (2E)-4-hydroxy-3-methylbut-2-enyl diphosphate + oxidized [flavodoxin] + H2O + 2 H(+) = 2-C-methyl-D-erythritol 2,4-cyclic diphosphate + reduced [flavodoxin]. It functions in the pathway isoprenoid biosynthesis; isopentenyl diphosphate biosynthesis via DXP pathway; isopentenyl diphosphate from 1-deoxy-D-xylulose 5-phosphate: step 5/6. Converts 2C-methyl-D-erythritol 2,4-cyclodiphosphate (ME-2,4cPP) into 1-hydroxy-2-methyl-2-(E)-butenyl 4-diphosphate. This chain is 4-hydroxy-3-methylbut-2-en-1-yl diphosphate synthase (flavodoxin), found in Helicobacter pylori (strain G27).